Reading from the N-terminus, the 871-residue chain is CRISPR system Cmr subunit Cmr2 (871 aa).

A not required for target RNA cleavage region spans residues 1–215 (MVNIKEKLFV…THLDLTSALS (215 aa)). His13, Asp14, and His25 together coordinate Mn(2+). Zn(2+) is bound by residues Cys448, Cys451, Cys478, and Cys481. A GGDEF domain is found at 592-752 (KYYAILVMDG…GKDTLAIGLL (161 aa)). Asp600, Glu656, Asp673, Asp674, Glu694, and Glu700 together coordinate Mn(2+).

This sequence belongs to the CRISPR system Cmr2 family. In terms of assembly, part of the type III-B Cmr ribonucleoprotein (RNP) complex, an elongated RNP with Cmr2 and Cmr3 as the base, with Cmr4 and Cmr5 forming a helical core along the mature crRNA (39 or 45 nt in length), while the complex is capped by Cmr6 and Cmr1. The 5' end of the crRNA is bound to Cmr2 and Cmr3, while Cmr6 and a Cmr1 subunit (Cmr1-1 or Cmr1-2) cap the 3' end of the crRNA. The target RNA lies antiparallel to the crRNA, with its 5' end near Cmr1 and Cmr6 and its 3' end near Cmr2 and Cmr3; major target cleavage occurs nears the junction of Cmr1/Cmr6 and Cmr4/Cmr, with minor cleavage occurring at 6 nt intervals which coincide with the proposed spacing of Cmr4 subunits. Forms a 1:1 complex with Cmr3. The Cmr2-Cmr3 complex non-specifically binds ss-target RNA and crRNA. Interacts with Cmr3, Cmr4 and Cmr5. Ca(2+) serves as cofactor. It depends on Mn(2+) as a cofactor. The cofactor is Zn(2+).

Its subcellular location is the cytoplasm. Functionally, CRISPR (clustered regularly interspaced short palindromic repeat), is an adaptive immune system that provides protection against mobile genetic elements (viruses, transposable elements and conjugative plasmids). CRISPR clusters contain sequences complementary to antecedent mobile elements and target invading nucleic acids. CRISPR clusters are transcribed and processed into CRISPR RNA (crRNA), formerly called psiRNA (prokaryotic silencing) in this organism. Part of the Cmr ribonucleoprotein complex which has divalent cation-dependent endoribonuclease activity specific for ssRNA complementary to the crRNA (target RNA), generating 5' hydroxy- and 3' phosphate or 2'-3' cyclic phosphate termini. Cmr4 is probably the subunit that cleaves target RNA. Cmr complex does not cleave ssDNA complementary to the crRNA. Cleavage of target RNA is guided by the crRNA; substrate cleavage occurs a fixed distance (14 nt) from the 3' end of the crRNA. In vitro reconstitution shows Cmr1-2 and Cmr5 are not absolutely necessary for target cleavage. This is CRISPR system Cmr subunit Cmr2 from Pyrococcus furiosus (strain ATCC 43587 / DSM 3638 / JCM 8422 / Vc1).